Consider the following 123-residue polypeptide: UPF0299 membrane protein VV1471 (123 aa).

The next 4 membrane-spanning stretches (helical) occupy residues 8-28 (LFGLVVSFGLIFLALTIGSGI), 35-55 (SVPGSVIGMLVLFVSMAIGLV), 71-91 (MILLFVPISVGLMEHFDMLIA), and 94-114 (LPIIASAIGGSLIVLVSLGWL).

It belongs to the UPF0299 family.

It localises to the cell inner membrane. This is UPF0299 membrane protein VV1471 from Vibrio vulnificus (strain YJ016).